Consider the following 207-residue polypeptide: MGSQWGKDKAYLKAKQSGYRSRAAMKLKEIIQKNPVIRPDDNILDLGAAPGSWLQVLREMTNGVIVGVDLNPILPIEGVRTIIGDFSDPVVIAQIRELMPEVNGIVCDASPKLSGQRSFDQARAIELNEMALGVARQLLKQGGNMIMKSFQGEDFSWLYNRVKQEFYSVRTYKAHTTRKGSTEMYIIAKNFIGTHQGLEESVSDGSA.

Positions 51, 53, 69, 85, and 108 each coordinate S-adenosyl-L-methionine. The Proton acceptor role is filled by K148.

Belongs to the class I-like SAM-binding methyltransferase superfamily. RNA methyltransferase RlmE family.

It is found in the cytoplasm. The enzyme catalyses uridine(2552) in 23S rRNA + S-adenosyl-L-methionine = 2'-O-methyluridine(2552) in 23S rRNA + S-adenosyl-L-homocysteine + H(+). Its function is as follows. Specifically methylates the uridine in position 2552 of 23S rRNA at the 2'-O position of the ribose in the fully assembled 50S ribosomal subunit. The sequence is that of Ribosomal RNA large subunit methyltransferase E from Methanospirillum hungatei JF-1 (strain ATCC 27890 / DSM 864 / NBRC 100397 / JF-1).